A 703-amino-acid chain; its full sequence is Serotransferrin (703 aa).

Residues 1 to 19 (MDLSLHVALCLGMLALCLA) form the signal peptide. Transferrin-like domains are found at residues 27 to 341 (VRWC…ALKE) and 354 to 686 (VRWC…SLNK). 2 disulfide bridges follow: C30–C65 and C40–C56. Fe(3+) contacts are provided by D80 and Y112. Disulfide bonds link C135/C218, C180/C193, and C246/C260. Hydrogencarbonate-binding residues include T137, K141, A143, and G144. A Fe(3+)-binding site is contributed by Y212. H268 provides a ligand contact to Fe(3+). The segment at 341 to 350 (EGVKEDDLAA) is connecting region. 2 disulfides stabilise this stretch: C357/C389 and C367/C380. Fe(3+) contacts are provided by D404 and Y443. Cystine bridges form between C414–C698, C432–C659, C466–C545, C490–C687, C500–C514, C511–C528, and C585–C599. Residues T468, R472, A474, and G475 each coordinate hydrogencarbonate. Y539 provides a ligand contact to Fe(3+). Position 607 (H607) interacts with Fe(3+).

The protein belongs to the transferrin family. As to quaternary structure, monomer. In terms of tissue distribution, plasma.

Its subcellular location is the secreted. Functionally, transferrins are iron binding transport proteins which can bind two Fe(3+) ions in association with the binding of an anion, usually bicarbonate. It is responsible for the transport of iron from sites of absorption and heme degradation to those of storage and utilization. Serum transferrin may also have a further role in stimulating cell proliferation. The protein is Serotransferrin (tf) of Xenopus tropicalis (Western clawed frog).